We begin with the raw amino-acid sequence, 231 residues long: Antiholin-like protein LrgB (231 aa).

Helical transmembrane passes span 7 to 24 (PYFG…GTFL), 34 to 56 (FTPL…FSYA), 91 to 113 (WWQI…YLLA), 149 to 171 (ITAF…FLKV), and 207 to 229 (ASIA…VQLI).

It belongs to the CidB/LrgB family. LrgB subfamily.

The protein resides in the cell membrane. Its function is as follows. Inhibits the expression or activity of extracellular murein hydrolases by interacting, possibly with LrgA, with the holin-like protein CidA. The LrgAB and CidA proteins may affect the proton motive force of the membrane. May be involved in programmed cell death (PCD), possibly triggering PCD in response to antibiotics and environmental stresses. The protein is Antiholin-like protein LrgB of Bacillus subtilis (strain 168).